A 674-amino-acid polypeptide reads, in one-letter code: tRNA 5-methylaminomethyl-2-thiouridine biosynthesis bifunctional protein MnmC (674 aa).

A tRNA (mnm(5)s(2)U34)-methyltransferase region spans residues 1–237; that stretch reads MLTSYQLESP…KREMTVGELN (237 aa). Residues 270–674 form an FAD-dependent cmnm(5)s(2)U34 oxidoreductase region; sequence VGAGLAGANT…IRDLKRSQIL (405 aa).

In the N-terminal section; belongs to the methyltransferase superfamily. tRNA (mnm(5)s(2)U34)-methyltransferase family. This sequence in the C-terminal section; belongs to the DAO family. FAD is required as a cofactor.

The protein resides in the cytoplasm. It catalyses the reaction 5-aminomethyl-2-thiouridine(34) in tRNA + S-adenosyl-L-methionine = 5-methylaminomethyl-2-thiouridine(34) in tRNA + S-adenosyl-L-homocysteine + H(+). Catalyzes the last two steps in the biosynthesis of 5-methylaminomethyl-2-thiouridine (mnm(5)s(2)U) at the wobble position (U34) in tRNA. Catalyzes the FAD-dependent demodification of cmnm(5)s(2)U34 to nm(5)s(2)U34, followed by the transfer of a methyl group from S-adenosyl-L-methionine to nm(5)s(2)U34, to form mnm(5)s(2)U34. The sequence is that of tRNA 5-methylaminomethyl-2-thiouridine biosynthesis bifunctional protein MnmC from Marinomonas sp. (strain MWYL1).